The following is a 463-amino-acid chain: ATP synthase subunit beta (463 aa).

152–159 is an ATP binding site; it reads GGAGVGKT.

It belongs to the ATPase alpha/beta chains family. F-type ATPases have 2 components, CF(1) - the catalytic core - and CF(0) - the membrane proton channel. CF(1) has five subunits: alpha(3), beta(3), gamma(1), delta(1), epsilon(1). CF(0) has three main subunits: a(1), b(2) and c(9-12). The alpha and beta chains form an alternating ring which encloses part of the gamma chain. CF(1) is attached to CF(0) by a central stalk formed by the gamma and epsilon chains, while a peripheral stalk is formed by the delta and b chains.

It localises to the cell membrane. The enzyme catalyses ATP + H2O + 4 H(+)(in) = ADP + phosphate + 5 H(+)(out). In terms of biological role, produces ATP from ADP in the presence of a proton gradient across the membrane. The catalytic sites are hosted primarily by the beta subunits. The chain is ATP synthase subunit beta from Clostridium botulinum (strain Eklund 17B / Type B).